Here is a 612-residue protein sequence, read N- to C-terminus: MDEADSWELYLALGLPKDATSDQIKESYYRLSRLFHPDRHTADQKAAAEEKFQIIQHAYEVLSDPSKKEIYDNFGEQGLKTDWNVGFPGKSAEELKNKIREQIQERDIHEIDSLVQSRSETTIVVNMTPLFARNIRVQNALGLGAGTRMLTPYERFSLIQWVSFQIKSSFSIPTSFSNDLKKPSFNSFSSGSFDDEFSAPSDEDEGNHKTSSRLSIVTEASMRQNSKLQPSIFAVYHSQPSPNLSSEIGFSLLRPGLITVKSVYAINNQTFIVPLIQISGLKRPPQATVVIGRQITRFGTLTARWKTGVWSLGSWGIASPRGANSSFSLTWQQMKAIPNSLVPQLSWNAEVTAGLMYSGIAYNYNLKNATEDSPYQIKLGTSMSTVGGLQVSGDTSRKVGRYSTFGVNISVGVPTGSITFSLNWSRLGQKISLPIMWCSVFDRSAVFWGLVFPITSILGVEQFFLRPRRLSNQKRLRLLRLQKLKDSQERKKVSAIRAVKLMKEIVEKKQKLEMEKGGLVIEYAEYRVVNCGANEPDLKQDVTISIAALVENSRLAIPSSVSKSSIIGIYPLFSDNEKELEIVYTFHQQRHRVVLRDKQGVFLPSREHKILS.

In terms of domain architecture, J spans 8-75 (ELYLALGLPK…SKKEIYDNFG (68 aa)). Residues 445–465 (AVFWGLVFPITSILGVEQFFL) traverse the membrane as a helical segment.

The protein belongs to the DnaJ family.

The protein localises to the membrane. This is an uncharacterized protein from Schizosaccharomyces pombe (strain 972 / ATCC 24843) (Fission yeast).